The chain runs to 102 residues: Large ribosomal subunit protein bL21 (102 aa).

The protein belongs to the bacterial ribosomal protein bL21 family. As to quaternary structure, part of the 50S ribosomal subunit. Contacts protein L20.

In terms of biological role, this protein binds to 23S rRNA in the presence of protein L20. This chain is Large ribosomal subunit protein bL21, found in Listeria innocua serovar 6a (strain ATCC BAA-680 / CLIP 11262).